The sequence spans 300 residues: 4-hydroxy-tetrahydrodipicolinate synthase (300 aa).

Thr-49 serves as a coordination point for pyruvate. Tyr-137 (proton donor/acceptor) is an active-site residue. Lys-166 functions as the Schiff-base intermediate with substrate in the catalytic mechanism. Ile-208 contributes to the pyruvate binding site.

Belongs to the DapA family. As to quaternary structure, homotetramer; dimer of dimers.

It is found in the cytoplasm. It catalyses the reaction L-aspartate 4-semialdehyde + pyruvate = (2S,4S)-4-hydroxy-2,3,4,5-tetrahydrodipicolinate + H2O + H(+). The protein operates within amino-acid biosynthesis; L-lysine biosynthesis via DAP pathway; (S)-tetrahydrodipicolinate from L-aspartate: step 3/4. In terms of biological role, catalyzes the condensation of (S)-aspartate-beta-semialdehyde [(S)-ASA] and pyruvate to 4-hydroxy-tetrahydrodipicolinate (HTPA). This chain is 4-hydroxy-tetrahydrodipicolinate synthase, found in Methanopyrus kandleri (strain AV19 / DSM 6324 / JCM 9639 / NBRC 100938).